Reading from the N-terminus, the 405-residue chain is Homocitrate synthase AksA (405 aa).

The 252-residue stretch at 23 to 274 folds into the Pyruvate carboxyltransferase domain; it reads IEICDVTLRD…IERYDTTKLT (252 aa).

This sequence belongs to the alpha-IPM synthase/homocitrate synthase family.

It carries out the reaction acetyl-CoA + 2-oxoglutarate + H2O = (2R)-homocitrate + CoA + H(+). The enzyme catalyses 2-oxoadipate + acetyl-CoA + H2O = (R)-dihomocitrate + CoA + H(+). The catalysed reaction is 2-oxoheptanedioate + acetyl-CoA + H2O = (R)-trihomocitrate + CoA + H(+). The protein operates within organic acid metabolism; 2-oxosuberate biosynthesis. In terms of biological role, catalyzes the condensation of alpha-ketoglutarate and acetyl-CoA to form (R)-homocitrate. Can also catalyze the condensation of alpha-ketoadipate with acetyl-CoA to form (R)-homo(2)citrate, and the condensation of alpha-ketopimelate with acetyl-CoA to form (R)-homo(3)citrate. These reactions are part of the biosynthesis pathway of coenzyme B and biotin. In Methanosarcina acetivorans (strain ATCC 35395 / DSM 2834 / JCM 12185 / C2A), this protein is Homocitrate synthase AksA (aksA).